A 337-amino-acid polypeptide reads, in one-letter code: Phosphate acyltransferase (337 aa).

The protein belongs to the PlsX family. In terms of assembly, homodimer. Probably interacts with PlsY.

The protein resides in the cytoplasm. It catalyses the reaction a fatty acyl-[ACP] + phosphate = an acyl phosphate + holo-[ACP]. Its pathway is lipid metabolism; phospholipid metabolism. In terms of biological role, catalyzes the reversible formation of acyl-phosphate (acyl-PO(4)) from acyl-[acyl-carrier-protein] (acyl-ACP). This enzyme utilizes acyl-ACP as fatty acyl donor, but not acyl-CoA. This chain is Phosphate acyltransferase, found in Polynucleobacter necessarius subsp. necessarius (strain STIR1).